The sequence spans 357 residues: Fructose-1,6-bisphosphatase class 1 3 (357 aa).

Residues E94, D116, L118, and D119 each coordinate Mg(2+). Substrate-binding positions include 119–122 (DGSS) and N211. E283 lines the Mg(2+) pocket.

The protein belongs to the FBPase class 1 family. As to quaternary structure, homotetramer. Mg(2+) serves as cofactor.

The protein localises to the cytoplasm. It catalyses the reaction beta-D-fructose 1,6-bisphosphate + H2O = beta-D-fructose 6-phosphate + phosphate. It participates in carbohydrate biosynthesis; Calvin cycle. The chain is Fructose-1,6-bisphosphatase class 1 3 from Methylibium petroleiphilum (strain ATCC BAA-1232 / LMG 22953 / PM1).